A 227-amino-acid chain; its full sequence is Inner membrane lipoprotein SadB (227 aa).

The signal sequence occupies residues 1–21 (MHKNGKFIPLLALGFTFFLSG). Residue C22 is the site of N-palmitoyl cysteine attachment. C22 carries the S-diacylglycerol cysteine lipid modification. Positions 31–68 (VEEMKEQQKEQETKINLLEKQQKEQEAKINLLEKQQAT) form a coiled coil.

As to quaternary structure, homotrimer.

It localises to the cell inner membrane. Functionally, required for proper surface expression of the autotransporter adhesin SadA. Could be directly involved in the biogenesis of functionally active SadA. The polypeptide is Inner membrane lipoprotein SadB (Salmonella typhimurium (strain LT2 / SGSC1412 / ATCC 700720)).